Here is a 387-residue protein sequence, read N- to C-terminus: Zinc transporter 7 (387 aa).

Topologically, residues 1 to 37 (MLPLSIKDDEYKPAKFNLVVKLSGWFRSILADKTSRN) are cytoplasmic. The chain crosses the membrane as a helical span at residues 38–58 (LFFFLCLNLSFAFVELLYGIW). The Lumenal segment spans residues 59–67 (SNSLGLISD). The chain crosses the membrane as a helical span at residues 68–88 (SFHMFFDCTALLAGLAASVIS). The Cytoplasmic segment spans residues 89-102 (RWRSNDSFSYGYVR). The chain crosses the membrane as a helical span at residues 103–123 (AEVLAGFVNGLFLIFTAFFIF). Topologically, residues 124–140 (SEGVERALEPPDVHHDR) are lumenal. The helical transmembrane segment at 141 to 161 (LLPVSIAGLLVNLVGIFVFQH) threads the bilayer. A his-rich loop region spans residues 161 to 232 (HGGHGHSHGG…HDDQHCHDDH (72 aa)). The Cytoplasmic portion of the chain corresponds to 162–247 (GGHGHSHGGD…KGSSKQILQG (86 aa)). The segment at 167–237 (SHGGDDHGHS…CHDDHTLTPG (71 aa)) is disordered. The segment covering 187–201 (GHSHGGHGHSHGGHG) has biased composition (basic residues). 2 stretches are compositionally biased toward basic and acidic residues: residues 202–214 (HSHESKHGHDHGH) and 221–233 (HSHDDQHCHDDHT). Residues 248 to 268 (VFLHIVADTLGSVGVIISAIL) traverse the membrane as a helical segment. Residues 269-273 (MQKYD) are Lumenal-facing. The helical transmembrane segment at 274–294 (LMIADPICSMLIALLIGVSVV) threads the bilayer. Topologically, residues 295–387 (PLLRESIGIL…LYVQIEVAAM (93 aa)) are cytoplasmic.

Belongs to the cation diffusion facilitator (CDF) transporter (TC 2.A.4) family. SLC30A subfamily. As to quaternary structure, homooligomer.

It localises to the golgi apparatus membrane. It is found in the cytoplasmic vesicle. The protein localises to the golgi apparatus. The protein resides in the trans-Golgi network. Its subcellular location is the sarcoplasmic reticulum. It localises to the mitochondrion. The catalysed reaction is Zn(2+)(in) = Zn(2+)(out). Zinc ion transporter mediating zinc entry from the cytosol into the lumen of organelles along the secretory pathway. By contributing to zinc ion homeostasis within the early secretory pathway, regulates the activation and folding of enzymes like alkaline phosphatases. In Danio rerio (Zebrafish), this protein is Zinc transporter 7 (slc30a7).